The following is a 112-amino-acid chain: Small ribosomal subunit protein bS6 (112 aa).

The protein belongs to the bacterial ribosomal protein bS6 family.

Binds together with bS18 to 16S ribosomal RNA. This is Small ribosomal subunit protein bS6 (rpsF) from Chlamydia muridarum (strain MoPn / Nigg).